The primary structure comprises 789 residues: Probable 3-hydroxyacyl-CoA dehydrogenase (789 aa).

The protein belongs to the 3-hydroxyacyl-CoA dehydrogenase family.

It carries out the reaction a (3S)-3-hydroxyacyl-CoA + NAD(+) = a 3-oxoacyl-CoA + NADH + H(+). Its pathway is lipid metabolism; fatty acid beta-oxidation. In terms of biological role, involved in the degradation of long-chain fatty acids. The protein is Probable 3-hydroxyacyl-CoA dehydrogenase (fadN) of Bacillus subtilis (strain 168).